The following is a 757-amino-acid chain: Maltose phosphorylase (757 aa).

354 to 355 (WD) is a binding site for substrate. E483 acts as the Proton donor in catalysis. Substrate is bound at residue 588-589 (KQ).

Belongs to the glycosyl hydrolase 65 family.

The catalysed reaction is D-maltose + phosphate = beta-D-glucose 1-phosphate + D-glucose. The protein operates within glycan degradation; maltose degradation. In terms of biological role, catalyzes the phosphorolysis of maltose, leading to the formation of glucose and glucose 1-P. This Bacillus subtilis (strain 168) protein is Maltose phosphorylase (mdxK).